Consider the following 220-residue polypeptide: Iron-sulfur cluster repair protein YtfE (220 aa).

It belongs to the RIC family. YtfE subfamily. Homodimer.

The protein resides in the cytoplasm. Its function is as follows. Di-iron-containing protein involved in the repair of iron-sulfur clusters damaged by oxidative and nitrosative stress conditions. The sequence is that of Iron-sulfur cluster repair protein YtfE from Escherichia coli O157:H7.